The chain runs to 461 residues: MEKYVVVLAAGKGTRMKTKLYKVLHQVCGKAMVEHVVDAARAVKPSKIVTIVGHGAEDVEKVLAGKSEFVMQEEQLGTGHAVMQAEGQLAALEGATLVVTGDTPLFTSETFEKLFAYHEEEGNAATVLTAEAPDPFGYGRIIRDDQGNVLRIVEQKDGKPEELKVKEINTGVFCFDNQDLWVALKQVGNDNSQGEYYLTDVLEILRKAGKKVGAYKMPDFSESLGVNDRIALAEATRIMQRRINEGHMRDGVTFIDPATAYIDADVEIGNDTVIEGGVTIKGHTVIGSDCLITSGSRIVDSQIGNGVTVTSSTIEESIMEDNTDIGPNSHLRPKALIKRGAHLGNFVEVKKAEIGENTKVGHLTYVGDATLGKDINVGCGVIFSNFDGVKKFHTTVGDKSFIGAGSTLVSPINVADHAFIAADSTITKDVGKYEMAIARGRQVNKKDYWHKLPLSEDEEWK.

The interval 1–229 (MEKYVVVLAA…FSESLGVNDR (229 aa)) is pyrophosphorylase. UDP-N-acetyl-alpha-D-glucosamine-binding positions include 8-11 (LAAG), K22, Q72, and 77-78 (GT). D102 is a binding site for Mg(2+). UDP-N-acetyl-alpha-D-glucosamine contacts are provided by G139, E154, N169, and N227. Mg(2+) is bound at residue N227. Residues 230–250 (IALAEATRIMQRRINEGHMRD) form a linker region. Positions 251–461 (GVTFIDPATA…LPLSEDEEWK (211 aa)) are N-acetyltransferase. UDP-N-acetyl-alpha-D-glucosamine contacts are provided by R332 and K350. The Proton acceptor role is filled by H362. The UDP-N-acetyl-alpha-D-glucosamine site is built by Y365 and N376. Positions 422 and 439 each coordinate acetyl-CoA.

This sequence in the N-terminal section; belongs to the N-acetylglucosamine-1-phosphate uridyltransferase family. It in the C-terminal section; belongs to the transferase hexapeptide repeat family. As to quaternary structure, homotrimer. The cofactor is Mg(2+).

The protein resides in the cytoplasm. It catalyses the reaction alpha-D-glucosamine 1-phosphate + acetyl-CoA = N-acetyl-alpha-D-glucosamine 1-phosphate + CoA + H(+). It carries out the reaction N-acetyl-alpha-D-glucosamine 1-phosphate + UTP + H(+) = UDP-N-acetyl-alpha-D-glucosamine + diphosphate. Its pathway is nucleotide-sugar biosynthesis; UDP-N-acetyl-alpha-D-glucosamine biosynthesis; N-acetyl-alpha-D-glucosamine 1-phosphate from alpha-D-glucosamine 6-phosphate (route II): step 2/2. The protein operates within nucleotide-sugar biosynthesis; UDP-N-acetyl-alpha-D-glucosamine biosynthesis; UDP-N-acetyl-alpha-D-glucosamine from N-acetyl-alpha-D-glucosamine 1-phosphate: step 1/1. It participates in bacterial outer membrane biogenesis; LPS lipid A biosynthesis. In terms of biological role, catalyzes the last two sequential reactions in the de novo biosynthetic pathway for UDP-N-acetylglucosamine (UDP-GlcNAc). The C-terminal domain catalyzes the transfer of acetyl group from acetyl coenzyme A to glucosamine-1-phosphate (GlcN-1-P) to produce N-acetylglucosamine-1-phosphate (GlcNAc-1-P), which is converted into UDP-GlcNAc by the transfer of uridine 5-monophosphate (from uridine 5-triphosphate), a reaction catalyzed by the N-terminal domain. In Lactobacillus delbrueckii subsp. bulgaricus (strain ATCC BAA-365 / Lb-18), this protein is Bifunctional protein GlmU.